The chain runs to 751 residues: Putative tyrosine-protein kinase EpsB (751 aa).

Topologically, residues 1–31 (MTQNLSQPPAVNAPESELDLVRYLDVLVANR) are cytoplasmic. The chain crosses the membrane as a helical span at residues 32–52 (WLIAGIAAVVMLLGATYAFLA). Over 53–444 (RPVYEADVLV…VPEEPVKPKK (392 aa)) the chain is Periplasmic. A helical transmembrane segment spans residues 445 to 465 (LTVTALAGVLGVVLGVVAAFV). The Cytoplasmic segment spans residues 466–751 (RNTLFGGITE…PSAEAEAESA (286 aa)).

This sequence belongs to the etk/wzc family.

The protein resides in the cell inner membrane. The catalysed reaction is L-tyrosyl-[protein] + ATP = O-phospho-L-tyrosyl-[protein] + ADP + H(+). Its function is as follows. Probably involved in polymerization and/or export of exopolysaccharide EPS I which functions as a virulence factor. May be involved in an ATP-dependent process in the pathway for EPS I production, possibly export of the trimeric repeat units across the inner membrane or their polymerization. This Ralstonia nicotianae (strain ATCC BAA-1114 / GMI1000) (Ralstonia solanacearum) protein is Putative tyrosine-protein kinase EpsB (epsB).